A 485-amino-acid chain; its full sequence is Cobyric acid synthase (485 aa).

A GATase cobBQ-type domain is found at 250-448; it reads TQTVAVIAYP…LHGMFEDPRV (199 aa). The Nucleophile role is filled by cysteine 334. The active site involves histidine 440.

It belongs to the CobB/CobQ family. CobQ subfamily.

The protein operates within cofactor biosynthesis; adenosylcobalamin biosynthesis. In terms of biological role, catalyzes amidations at positions B, D, E, and G on adenosylcobyrinic A,C-diamide. NH(2) groups are provided by glutamine, and one molecule of ATP is hydrogenolyzed for each amidation. In Polaromonas naphthalenivorans (strain CJ2), this protein is Cobyric acid synthase.